A 329-amino-acid polypeptide reads, in one-letter code: Aspartate--ammonia ligase (329 aa).

This sequence belongs to the class-II aminoacyl-tRNA synthetase family. AsnA subfamily.

Its subcellular location is the cytoplasm. The catalysed reaction is L-aspartate + NH4(+) + ATP = L-asparagine + AMP + diphosphate + H(+). It participates in amino-acid biosynthesis; L-asparagine biosynthesis; L-asparagine from L-aspartate (ammonia route): step 1/1. The chain is Aspartate--ammonia ligase from Ureaplasma parvum serovar 3 (strain ATCC 27815 / 27 / NCTC 11736).